The sequence spans 709 residues: MAADESSADTLRLQFKAMQELQHRRLQKQMEKKREKELSCQSKADNQEGFMVIPDGLSLLDTEEQNLKNIFEKRVLEDEIQHLRSELRETVDENGRLYKLLKERDFEIKHLKKKIEEDRFAFTGASGMAGDLVATKIVELSKKNRGLMAESESAKVRIKQLTNRIQELEHQLQMASAKPPSKGATDAGAKPLKTQTGDRALLETPEVKALQDRLAATNLKMSDLRNQIQSAKQELRVAQKVLANEVGEDVNIQQLLASPGTWRGRAQQILVLQSRVRDLEKQLGQRQNKPAGSSSSEVPLSSDSRKMTAQEKNLLRIRSLERDKQESWEKLASERDTLQTELEELRKKFEGMRSRNKVLSSEVKTLRSQMTTLVEKGRHDDELIDALMDQLKQLQDILSSLSVQEESRRTSQQHLDQKVNSEAQRSSSLVAQLRAMVADREAKVRQLELEIGQLSVQYLHGKGGGEGASPADARFPEDQTPITNSPASAGDHVGRLGSSRSVTSLGHTLVESALTRPSLPSPHGTSPRFSDSPEQKGWQAQAAEMKALWQAAEVERDRLNEFVTVLQKRVEESSSKLLEAERRLQEERQRAVLLEQHLEKMRLEPSRASVSQKTKNKPGPPAANTKPNSAGSAKKDSSSTQLCDMPMESQIQELNARLAIQMEENGILRDALGSALRGKEEDFRMYHQTLGQVKGVFLQALRQQKANKQ.

3 coiled-coil regions span residues 70 to 97 (IFEK…NGRL), 139 to 178 (ELSK…ASAK), and 206 to 288 (EVKA…QRQN). Ser258 is modified (phosphoserine). Residues 281-312 (KQLGQRQNKPAGSSSSEVPLSSDSRKMTAQEK) are disordered. Low complexity predominate over residues 293–302 (SSSSEVPLSS). Residues 323 to 457 (DKQESWEKLA…ELEIGQLSVQ (135 aa)) adopt a coiled-coil conformation. 3 disordered regions span residues 462–499 (KGGG…LGSS), 512–542 (SALT…QAQA), and 600–641 (KMRL…SSTQ). Phosphoserine is present on residues Ser469 and Ser532. Residues 539-604 (QAQAAEMKAL…EQHLEKMRLE (66 aa)) are a coiled coil.

In terms of assembly, interacts with PCM1, CEP290 and PCNT.

It localises to the cytoplasm. The protein resides in the cytoskeleton. Its subcellular location is the microtubule organizing center. It is found in the centrosome. The protein localises to the centriolar satellite. It localises to the cilium basal body. In terms of biological role, required for primary cilia formation and promotes the localization of the ciliopathy protein BBS4 to both centriolar satellites and cilia. In Mus musculus (Mouse), this protein is Coiled-coil domain-containing protein 13.